An 880-amino-acid polypeptide reads, in one-letter code: Guanine nucleotide-binding protein subunit beta 2 (880 aa).

Phosphoserine is present on S24. 3 Kelch repeats span residues 291–339 (NIYI…MVNN), 377–425 (HIFF…KIDI), and 501–552 (TVII…LTPS). The interval 624–649 (FNSGSAAQESPKAGASASSASAASFD) is disordered. The span at 638-647 (ASASSASAAS) shows a compositional bias: low complexity. Residues 691–738 (TVVLHGGSNGLNVLDDMWLMDLECETWTPIETFAKADSSEDGDEKLDS) form a Kelch 4 repeat.

In terms of assembly, g proteins are composed of 3 units, alpha, beta and gamma. GPB1 interacts with the alpha subunit GPA2.

The protein localises to the cytoplasm. It is found in the mitochondrion. Beta subunit of a guanine nucleotide-binding protein (G protein). G proteins are involved as modulators or transducers in various transmembrane signaling systems. The beta and gamma chains are required for the GTPase activity, for replacement of GDP by GTP, and for G protein-effector interaction. Involved in the determination of the cAMP level according to nutritional conditions, most probably as a regulator of cAMP phosphodiesterase. Required for the control of pseudohyphal and haploid invasive growth. The sequence is that of Guanine nucleotide-binding protein subunit beta 2 (GPB2) from Saccharomyces cerevisiae (strain ATCC 204508 / S288c) (Baker's yeast).